Consider the following 212-residue polypeptide: Adenine phosphoribosyltransferase (212 aa).

The protein belongs to the purine/pyrimidine phosphoribosyltransferase family. As to quaternary structure, homodimer.

It localises to the cytoplasm. The enzyme catalyses AMP + diphosphate = 5-phospho-alpha-D-ribose 1-diphosphate + adenine. It functions in the pathway purine metabolism; AMP biosynthesis via salvage pathway; AMP from adenine: step 1/1. In terms of biological role, catalyzes a salvage reaction resulting in the formation of AMP, that is energically less costly than de novo synthesis. The chain is Adenine phosphoribosyltransferase from Mycobacterium tuberculosis (strain CDC 1551 / Oshkosh).